The primary structure comprises 316 residues: Malate dehydrogenase (316 aa).

Residues 12–17 and aspartate 36 each bind NAD(+); that span reads GAGNIG. Substrate contacts are provided by arginine 85 and arginine 91. NAD(+) is bound by residues asparagine 98 and 121 to 123; that span reads VTN. 2 residues coordinate substrate: asparagine 123 and arginine 154. Histidine 178 functions as the Proton acceptor in the catalytic mechanism.

It belongs to the LDH/MDH superfamily. MDH type 3 family.

The enzyme catalyses (S)-malate + NAD(+) = oxaloacetate + NADH + H(+). In terms of biological role, catalyzes the reversible oxidation of malate to oxaloacetate. This Wolbachia sp. subsp. Brugia malayi (strain TRS) protein is Malate dehydrogenase.